The primary structure comprises 604 residues: Terpenoid synthase 30 (604 aa).

Asparagine 356, aspartate 360, asparagine 500, threonine 504, and glutamate 508 together coordinate Mg(2+). A DDXXD motif; degenerate motif is present at residues 356 to 360; the sequence is NDVCD.

It belongs to the terpene synthase family. Tpsa subfamily. The cofactor is Mg(2+). Requires Mn(2+) as cofactor.

It is found in the cytoplasm. It participates in secondary metabolite biosynthesis; terpenoid biosynthesis. Involved in terpene biosynthesis in roots. Possesses sesquiterpene (C15) synthase activity and diterpene (C20) synthase activity in vitro. The sequence is that of Terpenoid synthase 30 from Arabidopsis thaliana (Mouse-ear cress).